A 76-amino-acid chain; its full sequence is Bomanin Tailed 2 (76 aa).

The first 22 residues, 1–22 (MKALQVAGTLMLLFCLLAAVNA), serve as a signal peptide directing secretion. The propeptide at 23–24 (TP) is removed by a dipeptidylpeptidase. C33 and C36 are disulfide-bonded.

The protein belongs to the bomanin family.

The protein resides in the secreted. Functionally, secreted immune-induced peptide induced by Toll signaling. Has a role in resistance to bacterial and fungal infections. The strength of antimicrobial activity appears to correlate with the overall level of expression. The protein is Bomanin Tailed 2 of Drosophila melanogaster (Fruit fly).